The chain runs to 263 residues: uncharacterized protein (263 aa).

31–38 (GPTGSGKT) contributes to the ATP binding site.

Belongs to the CbbQ/NirQ/NorQ/GpvN family.

This is an uncharacterized protein from Staphylococcus aureus (strain NCTC 8325 / PS 47).